Here is a 414-residue protein sequence, read N- to C-terminus: Serine hydroxymethyltransferase (414 aa).

(6S)-5,6,7,8-tetrahydrofolate is bound by residues Leu-121 and 125-127; that span reads GHL. Lys-229 carries the post-translational modification N6-(pyridoxal phosphate)lysine.

It belongs to the SHMT family. As to quaternary structure, homodimer. It depends on pyridoxal 5'-phosphate as a cofactor.

The protein localises to the cytoplasm. It carries out the reaction (6R)-5,10-methylene-5,6,7,8-tetrahydrofolate + glycine + H2O = (6S)-5,6,7,8-tetrahydrofolate + L-serine. Its pathway is one-carbon metabolism; tetrahydrofolate interconversion. It participates in amino-acid biosynthesis; glycine biosynthesis; glycine from L-serine: step 1/1. Functionally, catalyzes the reversible interconversion of serine and glycine with tetrahydrofolate (THF) serving as the one-carbon carrier. This reaction serves as the major source of one-carbon groups required for the biosynthesis of purines, thymidylate, methionine, and other important biomolecules. Also exhibits THF-independent aldolase activity toward beta-hydroxyamino acids, producing glycine and aldehydes, via a retro-aldol mechanism. The sequence is that of Serine hydroxymethyltransferase from Paracidovorax citrulli (strain AAC00-1) (Acidovorax citrulli).